Reading from the N-terminus, the 101-residue chain is Large ribosomal subunit protein bL21 (101 aa).

This sequence belongs to the bacterial ribosomal protein bL21 family. In terms of assembly, part of the 50S ribosomal subunit. Contacts protein L20.

Its function is as follows. This protein binds to 23S rRNA in the presence of protein L20. The polypeptide is Large ribosomal subunit protein bL21 (Anaeromyxobacter dehalogenans (strain 2CP-1 / ATCC BAA-258)).